Here is a 250-residue protein sequence, read N- to C-terminus: uncharacterized protein (250 aa).

A helical membrane pass occupies residues 2-22 (ILRIIIFVIIILVVSLLLIYF).

It localises to the membrane. This is an uncharacterized protein from Acanthamoeba polyphaga (Amoeba).